The chain runs to 474 residues: L-arabinose isomerase (474 aa).

Positions 306, 331, 348, and 447 each coordinate Mn(2+).

Belongs to the arabinose isomerase family. Mn(2+) is required as a cofactor.

It carries out the reaction beta-L-arabinopyranose = L-ribulose. The protein operates within carbohydrate degradation; L-arabinose degradation via L-ribulose; D-xylulose 5-phosphate from L-arabinose (bacterial route): step 1/3. Functionally, catalyzes the conversion of L-arabinose to L-ribulose. The chain is L-arabinose isomerase from Lactiplantibacillus plantarum (strain ATCC BAA-793 / NCIMB 8826 / WCFS1) (Lactobacillus plantarum).